A 430-amino-acid polypeptide reads, in one-letter code: Serine/threonine transporter SstT (430 aa).

Helical transmembrane passes span 24-44 (IIVG…VTWI), 47-67 (FGTL…FVLV), 82-102 (FGTV…VAVL), 144-164 (AIID…GLAM), 186-206 (VIRW…FTNV), 223-243 (LLVG…IFIF), 294-314 (IPLG…IMAM), 320-340 (LGIQ…ALGA), and 361-381 (FGIS…IGVI).

This sequence belongs to the dicarboxylate/amino acid:cation symporter (DAACS) (TC 2.A.23) family.

It is found in the cell membrane. It carries out the reaction L-serine(in) + Na(+)(in) = L-serine(out) + Na(+)(out). The catalysed reaction is L-threonine(in) + Na(+)(in) = L-threonine(out) + Na(+)(out). In terms of biological role, involved in the import of serine and threonine into the cell, with the concomitant import of sodium (symport system). In Bifidobacterium adolescentis (strain ATCC 15703 / DSM 20083 / NCTC 11814 / E194a), this protein is Serine/threonine transporter SstT.